A 305-amino-acid chain; its full sequence is Acetaldehyde dehydrogenase (305 aa).

12–15 (SGNI) is a binding site for NAD(+). Residue Cys127 is the Acyl-thioester intermediate of the active site. NAD(+)-binding positions include 158-166 (SAGPGTRAN) and Asn277.

The protein belongs to the acetaldehyde dehydrogenase family.

The enzyme catalyses acetaldehyde + NAD(+) + CoA = acetyl-CoA + NADH + H(+). This Mycolicibacterium paratuberculosis (strain ATCC BAA-968 / K-10) (Mycobacterium paratuberculosis) protein is Acetaldehyde dehydrogenase.